We begin with the raw amino-acid sequence, 574 residues long: Septation ring formation regulator EzrA (574 aa).

At 1 to 7 (MSIGLVI) the chain is on the extracellular side. Residues 8-26 (LVAVVALLLVVGYGTAVLM) traverse the membrane as a helical segment. Coiled coils occupy residues 26-47 (MRKR…LYNL), 105-189 (KAKH…QFVT), 258-346 (ESRF…FLIS), 375-415 (SETK…IEKD), and 455-494 (STSN…LEEE). The Cytoplasmic portion of the chain corresponds to 27-574 (RKRNEALLQN…YEKTRENIRF (548 aa)).

It belongs to the EzrA family.

The protein resides in the cell membrane. Functionally, negative regulator of FtsZ ring formation; modulates the frequency and position of FtsZ ring formation. Inhibits FtsZ ring formation at polar sites. Interacts either with FtsZ or with one of its binding partners to promote depolymerization. In Streptococcus sanguinis (strain SK36), this protein is Septation ring formation regulator EzrA.